The chain runs to 151 residues: Endoribonuclease YbeY (151 aa).

Zn(2+) is bound by residues His114, His118, and His124.

It belongs to the endoribonuclease YbeY family. It depends on Zn(2+) as a cofactor.

The protein localises to the cytoplasm. In terms of biological role, single strand-specific metallo-endoribonuclease involved in late-stage 70S ribosome quality control and in maturation of the 3' terminus of the 16S rRNA. This is Endoribonuclease YbeY from Hamiltonella defensa subsp. Acyrthosiphon pisum (strain 5AT).